Reading from the N-terminus, the 318-residue chain is Lipid A biosynthesis acyltransferase (318 aa).

The chain crosses the membrane as a helical span at residues 27-47 (PQYWGIWLGIFFLLLLAFVPF). Positions 145 to 150 (HGWAID) match the HXXXXD motif motif.

Belongs to the LpxL/LpxM/LpxP family. LpxM subfamily.

The protein localises to the cell inner membrane. The enzyme catalyses an alpha-Kdo-(2-&gt;4)-alpha-Kdo-(2-&gt;6)-(acyl)-lipid IVA + a fatty acyl-[ACP] = an alpha-Kdo-(2-&gt;4)-alpha-Kdo-(2-&gt;6)-lipid A + holo-[ACP]. The protein operates within glycolipid biosynthesis; KDO(2)-lipid A biosynthesis; KDO(2)-lipid A from CMP-3-deoxy-D-manno-octulosonate and lipid IV(A): step 4/4. It participates in bacterial outer membrane biogenesis; lipopolysaccharide biosynthesis. In terms of biological role, catalyzes the transfer of an acyl chain from an acyl-[acyl-carrier-protein] (ACP) to a Kdo(2)-(acyl)-lipid IV(A) to form a Kdo(2)-lipid A. This Haemophilus influenzae (strain ATCC 51907 / DSM 11121 / KW20 / Rd) protein is Lipid A biosynthesis acyltransferase.